Here is a 1249-residue protein sequence, read N- to C-terminus: Pleckstrin homology-like domain family B member 2 (1249 aa).

2 disordered regions span residues 64–85 (QPVS…SPSL) and 128–154 (DHYT…SSRN). Phosphoserine occurs at positions 71 and 73. Positions 74–84 (PMGTSVRSSPS) are enriched in polar residues. Over residues 128–143 (DHYTGRDSERSTRLSE) the composition is skewed to basic and acidic residues. Phosphoserine occurs at positions 156, 203, 241, and 244. Disordered stretches follow at residues 190–248 (SPIS…LSNM) and 264–289 (NQMS…GEKD). The span at 231–248 (ENVSVRTRKYSGSSLSNM) shows a compositional bias: polar residues. Over residues 267-283 (SPLSLPPRSSLGNSRRG) the composition is skewed to low complexity. Phosphoserine is present on residues serine 329, serine 333, serine 347, serine 380, serine 383, serine 389, serine 411, serine 416, serine 465, serine 486, and serine 510. The disordered stretch occupies residues 388-424 (DSDLESLRQSSETPQPVLRERKSSISSISGRDDLMDY). Phosphothreonine occurs at positions 546 and 570. 2 coiled-coil regions span residues 580–692 (TQEL…LDNC) and 718–803 (FEDL…LCNL). The tract at residues 866–934 (VSQPQSSEHF…LGQSNSCGSV (69 aa)) is disordered. Residues 873-888 (EHFRSLEERKKQHKEG) are compositionally biased toward basic and acidic residues. Residue threonine 894 is modified to Phosphothreonine. Residues 901–919 (TPSLSPHFSSATMGRSTTP) show a composition bias toward polar residues. The stretch at 1028–1094 (IARIEEMERL…QKLIEKEVKI (67 aa)) forms a coiled coil. A PH domain is found at 1139–1242 (EKTCRGYLIK…WMDVIVTGAE (104 aa)).

In terms of assembly, interacts with FLNC. Interacts with AMOTL2; interaction may facilitate PHLDB2 localization to the myotube podosome cortex that surrounds the core. Part of a cortical microtubule stabilization complex (CMSC) composed of KANK1, PPFIA1, PPFIBP1, ERC1/ELKS, PHLDB2/LL5beta, CLASPs, KIF21A and possibly additional interactors; within CMSCs KANK1 and PHLDB2/LL5beta appear to be the core components for targeting of microtubule-binding proteins KIF21A and CLASPs, whereas PPFIA1, PPFIBP1 and ERC1/ELKS serve as scaffolds for protein clustering. In terms of tissue distribution, expressed at postsynaptic membranes of skeletal neuromuscular junctions (at protein level).

The protein resides in the cytoplasm. It localises to the membrane. Its subcellular location is the cell projection. The protein localises to the podosome. It is found in the cell cortex. Functionally, seems to be involved in the assembly of the postsynaptic apparatus. May play a role in acetyl-choline receptor (AChR) aggregation in the postsynaptic membrane. In Mus musculus (Mouse), this protein is Pleckstrin homology-like domain family B member 2 (Phldb2).